Consider the following 256-residue polypeptide: Type III pantothenate kinase (256 aa).

ATP is bound at residue 6–13 (DVGNSNIV). Residues Tyr100 and 107–110 (GADR) each bind substrate. Residue Asp109 is the Proton acceptor of the active site. Asp129 provides a ligand contact to K(+). Thr132 is an ATP binding site. Substrate is bound at residue Thr184.

Belongs to the type III pantothenate kinase family. Homodimer. It depends on NH4(+) as a cofactor. K(+) is required as a cofactor.

Its subcellular location is the cytoplasm. The catalysed reaction is (R)-pantothenate + ATP = (R)-4'-phosphopantothenate + ADP + H(+). Its pathway is cofactor biosynthesis; coenzyme A biosynthesis; CoA from (R)-pantothenate: step 1/5. In terms of biological role, catalyzes the phosphorylation of pantothenate (Pan), the first step in CoA biosynthesis. The protein is Type III pantothenate kinase of Geotalea daltonii (strain DSM 22248 / JCM 15807 / FRC-32) (Geobacter daltonii).